The sequence spans 371 residues: MPHHYILTLFGLLPVATNISTWWNFGSMLLTCLMLQVLTGFFLAVHYTANINLAFSSIIHITRDVPYGWLMQNLHAIGASMFFICIYIHIARGLYYGSHLNKETWMSGITLLITLIATAFFGYVLPGGQMSFRAATGITNLLTAVPYLGATMTTWLWGGFAINDPTLTRFFALHFILPFAIISLSSLHIILLHEEGSSNPLGTNPDIDKIPFHPYHSYKDLLLLTLMLLTLMITVSFFPDIFNDPDNFSKANPLVTPQHIKPEWYFLFAYGILRSIPNKLGGALALVMSIMILLTAPLTHTAHLRPMTFRPLSQLMFWTLISTFITITWAATKPVEPPYIIISQTTATLYFTFFISTPILGWIENKMMNSC.

A run of 4 helical transmembrane segments spans residues Phe25–Val45, Trp69–Ile90, Trp105–Leu125, and Phe170–Ile190. 2 residues coordinate heme b: His75 and His89. His174 and His188 together coordinate heme b. His193 contributes to the a ubiquinone binding site. Transmembrane regions (helical) follow at residues Tyr218–Phe238, Leu280–His300, Leu312–Thr332, and Tyr339–Pro358.

It belongs to the cytochrome b family. In terms of assembly, the cytochrome bc1 complex contains 3 respiratory subunits (MT-CYB, CYC1 and UQCRFS1), 2 core proteins (UQCRC1 and UQCRC2) and probably 6 low-molecular weight proteins. The cofactor is heme b.

Its subcellular location is the mitochondrion inner membrane. Its function is as follows. Component of the ubiquinol-cytochrome c reductase complex (complex III or cytochrome b-c1 complex) that is part of the mitochondrial respiratory chain. The b-c1 complex mediates electron transfer from ubiquinol to cytochrome c. Contributes to the generation of a proton gradient across the mitochondrial membrane that is then used for ATP synthesis. This chain is Cytochrome b (MT-CYB), found in Python regius (Ball python).